Reading from the N-terminus, the 423-residue chain is Gamma-glutamyl phosphate reductase (423 aa).

Belongs to the gamma-glutamyl phosphate reductase family.

The protein resides in the cytoplasm. The catalysed reaction is L-glutamate 5-semialdehyde + phosphate + NADP(+) = L-glutamyl 5-phosphate + NADPH + H(+). It functions in the pathway amino-acid biosynthesis; L-proline biosynthesis; L-glutamate 5-semialdehyde from L-glutamate: step 2/2. Its function is as follows. Catalyzes the NADPH-dependent reduction of L-glutamate 5-phosphate into L-glutamate 5-semialdehyde and phosphate. The product spontaneously undergoes cyclization to form 1-pyrroline-5-carboxylate. The chain is Gamma-glutamyl phosphate reductase from Desulfovibrio desulfuricans (strain ATCC 27774 / DSM 6949 / MB).